The following is a 150-amino-acid chain: UPF0735 ACT domain-containing protein Helmi_18680 (150 aa).

The ACT domain occupies 72 to 147 (SVSLLLEHHP…GVRSAQLVGS (76 aa)).

This sequence belongs to the UPF0735 family.

The chain is UPF0735 ACT domain-containing protein Helmi_18680 from Heliobacterium modesticaldum (strain ATCC 51547 / Ice1).